The chain runs to 359 residues: Very-long-chain (3R)-3-hydroxyacyl-CoA dehydratase (359 aa).

The Cytoplasmic portion of the chain corresponds to 1 to 144 (MSALTPHVYW…RKDPFLGLKK (144 aa)). A CS domain is found at 3–92 (ALTPHVYWAQ…QEEVWWNRLT (90 aa)). Positions 109–133 (LDESDAEMELREKEEKINKVSFESR) form a coiled coil. A helical membrane pass occupies residues 145–165 (GFLFMYNLVQFLGYSWIFVNM). Topologically, residues 166–186 (TVRLFILGQDSFYDTFHTIAD) are lumenal. Residues 187–207 (VMYFCQMLAIMEVINPAVGLV) form a helical membrane-spanning segment. The Cytoplasmic segment spans residues 208–209 (KT). The helical transmembrane segment at 210–230 (GVMPAFIQVMGRNFILFVIFG) threads the bilayer. At 231–239 (SLEDMQNKP) the chain is on the lumenal side. Residues 240–260 (VVFFVFYLWSTIEIFRYPFYM) form a helical membrane-spanning segment. Over 261 to 277 (LACIDTEWKLLTWLRYT) the chain is Cytoplasmic. The chain crosses the membrane as a helical span at residues 278–298 (IWMPLYPLGVLAEAVAVIQSI). Active-site residues include Tyr-283 and Glu-290. Residues 299 to 317 (PIFDETKLLSIPLPKATGL) are Lumenal-facing. Residues 318–338 (SLSFSYILQLYLVVMFLGLFI) form a helical membrane-spanning segment. At 339–359 (NFRHLFKQRTRRFRTKKRKAN) the chain is on the cytoplasmic side.

This sequence belongs to the very long-chain fatty acids dehydratase HACD family.

It is found in the endoplasmic reticulum membrane. It catalyses the reaction a very-long-chain (3R)-3-hydroxyacyl-CoA = a very-long-chain (2E)-enoyl-CoA + H2O. The enzyme catalyses (3R)-hydroxyhexadecanoyl-CoA = (2E)-hexadecenoyl-CoA + H2O. The protein operates within lipid metabolism; fatty acid biosynthesis. In terms of biological role, catalyzes the third of the four reactions of the long-chain fatty acids elongation cycle. This endoplasmic reticulum-bound enzymatic process, allows the addition of two carbons to the chain of long- and very long-chain fatty acids/VLCFAs per cycle. This enzyme catalyzes the dehydration of the 3-hydroxyacyl-CoA intermediate into trans-2,3-enoyl-CoA, within each cycle of fatty acid elongation. Thereby, it participates in the production of VLCFAs of different chain lengths that are involved in multiple biological processes as precursors of membrane lipids and lipid mediators. Involved in Rac1-signaling pathways leading to the modulation of gene expression. This chain is Very-long-chain (3R)-3-hydroxyacyl-CoA dehydratase, found in Danio rerio (Zebrafish).